The chain runs to 364 residues: Fructose-bisphosphate aldolase C (364 aa).

The residue at position 5 (Y5) is a Phosphotyrosine. Residues S36, S39, and S45 each carry the phosphoserine modification. R56 lines the substrate pocket. Residue K111 is modified to N6-acetyllysine. S132 bears the Phosphoserine mark. K147 provides a ligand contact to substrate. The active-site Proton acceptor is the E188. K230 functions as the Schiff-base intermediate with dihydroxyacetone-P in the catalytic mechanism.

It belongs to the class I fructose-bisphosphate aldolase family. As to quaternary structure, homotetramer. Interacts with ATP6V1E1.

The enzyme catalyses beta-D-fructose 1,6-bisphosphate = D-glyceraldehyde 3-phosphate + dihydroxyacetone phosphate. Its pathway is carbohydrate degradation; glycolysis; D-glyceraldehyde 3-phosphate and glycerone phosphate from D-glucose: step 4/4. The chain is Fructose-bisphosphate aldolase C (ALDOC) from Macaca fascicularis (Crab-eating macaque).